Reading from the N-terminus, the 243-residue chain is Proteasome subunit alpha (243 aa).

This sequence belongs to the peptidase T1A family. In terms of assembly, the 20S proteasome core is composed of 14 alpha and 14 beta subunits that assemble into four stacked heptameric rings, resulting in a barrel-shaped structure. The two inner rings, each composed of seven catalytic beta subunits, are sandwiched by two outer rings, each composed of seven alpha subunits. The catalytic chamber with the active sites is on the inside of the barrel. Has a gated structure, the ends of the cylinder being occluded by the N-termini of the alpha-subunits. Is capped at one or both ends by the proteasome regulatory ATPase, PAN.

The protein localises to the cytoplasm. Its activity is regulated as follows. The formation of the proteasomal ATPase PAN-20S proteasome complex, via the docking of the C-termini of PAN into the intersubunit pockets in the alpha-rings, triggers opening of the gate for substrate entry. Interconversion between the open-gate and close-gate conformations leads to a dynamic regulation of the 20S proteasome proteolysis activity. Its function is as follows. Component of the proteasome core, a large protease complex with broad specificity involved in protein degradation. The polypeptide is Proteasome subunit alpha (Pyrobaculum aerophilum (strain ATCC 51768 / DSM 7523 / JCM 9630 / CIP 104966 / NBRC 100827 / IM2)).